The sequence spans 1238 residues: Erythroid differentiation-related factor 1 (1238 aa).

Disordered regions lie at residues 1–38 (MGDAKEAGAEGPPAGAAARGGLSLLSQGESEESSAQGS), 220–268 (QPVS…GSEP), 517–561 (PKKE…SDDS), and 620–647 (KKESDLPAADPSTPIPLKYEDESSRGGP). Low complexity-rich tracts occupy residues 9 to 38 (AEGPPAGAAARGGLSLLSQGESEESSAQGS), 223 to 241 (SSTAEQQESSSSDQTNDSE), and 253 to 263 (SSVSEDPSASS). A compositionally biased stretch (acidic residues) spans 530–547 (NSDESYSEEEEEMPDSDE). TPR repeat units lie at residues 693-726 (SKAYYVLSDAAMSLQKYGRALRYIKLALQSHDTY) and 914-953 (AQAHCGAGDELKREFSPEEGLYYNKAIDYYLKALRSLGTR).

The protein resides in the nucleus. Transcription factor involved in erythroid differentiation. Involved in transcriptional activation of the globin gene. The chain is Erythroid differentiation-related factor 1 (EDRF1) from Homo sapiens (Human).